Here is a 348-residue protein sequence, read N- to C-terminus: MADTGSFIHLARPLGPATVGVAPSTAPLNVVIQPQAIFSILDHSLRRNADQERVIGTLLGTRSEDGTEVEIRTCFAVGHTETTDQVEVDMEYQKQMLALHLKANPKEVLVGWYATSSELNTFSALIQNFYGGQGDGTWPHPAVHLTVSTEPGKDIETRTYISAPVGVTAERAADSAAFIPVPYEIRYSEAERNGLEAIAQARDAEDRASSLFTDIETLEKSIEEVLGMIDRVSKYVESVIDEEAPASTALGQFLLNALALAPKVDPADIESDFNKHIQDVLVVSYLANTIRTQMELSNRLATAQLTLGGGDSTAIGGTGAESGGQRGGQRNNRQRGGQQRNQAEELRA.

The MPN domain occupies 30 to 166 (VVIQPQAIFS…TRTYISAPVG (137 aa)). Gly residues predominate over residues 312-327 (STAIGGTGAESGGQRG). The segment at 312-348 (STAIGGTGAESGGQRGGQRNNRQRGGQQRNQAEELRA) is disordered. Over residues 328–341 (GQRNNRQRGGQQRN) the composition is skewed to low complexity.

This sequence belongs to the eIF-3 subunit F family. In terms of assembly, component of the eukaryotic translation initiation factor 3 (eIF-3) complex.

The protein resides in the cytoplasm. Its function is as follows. Component of the eukaryotic translation initiation factor 3 (eIF-3) complex, which is involved in protein synthesis of a specialized repertoire of mRNAs and, together with other initiation factors, stimulates binding of mRNA and methionyl-tRNAi to the 40S ribosome. The eIF-3 complex specifically targets and initiates translation of a subset of mRNAs involved in cell proliferation. This chain is Eukaryotic translation initiation factor 3 subunit F, found in Coccidioides immitis (strain RS) (Valley fever fungus).